The following is a 428-amino-acid chain: Glutamyl-tRNA reductase (428 aa).

Substrate-binding positions include Thr50–Arg53, Ser110, Glu115–Gln117, and Gln121. Residue Cys51 is the Nucleophile of the active site. Residue Gly190–Gly195 participates in NADP(+) binding.

This sequence belongs to the glutamyl-tRNA reductase family. In terms of assembly, homodimer.

It carries out the reaction (S)-4-amino-5-oxopentanoate + tRNA(Glu) + NADP(+) = L-glutamyl-tRNA(Glu) + NADPH + H(+). The protein operates within porphyrin-containing compound metabolism; protoporphyrin-IX biosynthesis; 5-aminolevulinate from L-glutamyl-tRNA(Glu): step 1/2. In terms of biological role, catalyzes the NADPH-dependent reduction of glutamyl-tRNA(Glu) to glutamate 1-semialdehyde (GSA). This chain is Glutamyl-tRNA reductase, found in Campylobacter curvus (strain 525.92).